Reading from the N-terminus, the 737-residue chain is Translation initiation factor IF-2 (737 aa).

The segment at 55 to 152 (KKKEHIQHNK…PVPPRKNKPL (98 aa)) is disordered. Residues 60 to 70 (IQHNKNKDNFH) show a composition bias toward basic and acidic residues. Basic residues predominate over residues 88–98 (KNVHKNNRKRS). Residues 105–121 (NNNAKNGQRNNRNNRSN) are compositionally biased toward low complexity. Basic residues predominate over residues 122–131 (NKFKNKRNNN). Residues 132–142 (NKRNNNFKKGN) show a composition bias toward low complexity. The region spanning 238–407 (KRPPVVTIMG…LLEAEMLELH (170 aa)) is the tr-type G domain. The G1 stretch occupies residues 247–254 (GHVDHGKT). 247–254 (GHVDHGKT) lines the GTP pocket. A G2 region spans residues 272 to 276 (GITQH). A G3 region spans residues 293–296 (DTPG). GTP is bound by residues 293–297 (DTPGH) and 347–350 (NKID). The segment at 347-350 (NKID) is G4. The tract at residues 383–385 (SAK) is G5.

Belongs to the TRAFAC class translation factor GTPase superfamily. Classic translation factor GTPase family. IF-2 subfamily.

Its subcellular location is the cytoplasm. In terms of biological role, one of the essential components for the initiation of protein synthesis. Protects formylmethionyl-tRNA from spontaneous hydrolysis and promotes its binding to the 30S ribosomal subunits. Also involved in the hydrolysis of GTP during the formation of the 70S ribosomal complex. The chain is Translation initiation factor IF-2 from Ligilactobacillus salivarius (strain UCC118) (Lactobacillus salivarius).